The following is a 96-amino-acid chain: Transcriptional regulator ATRY (96 aa).

The GATA-type; atypical zinc-finger motif lies at 1–12; it reads VICTACGQQVNQ. The region spanning 1-96 is the ADD domain; the sequence is VICTACGQQV…IAVCDSVLEN (96 aa). Residues 27–82 form a PHD-type; atypical zinc finger; that stretch reads LICKRWCAEGGNLICCDSCHNAFCKKCIWRNLGRKEISKIMNEKNEWHCYICCPEP.

It belongs to the SNF2/RAD54 helicase family. In terms of tissue distribution, expressed in developing and adult testis. Also weakly expressed in prostate and epididymis.

It is found in the nucleus. The catalysed reaction is ATP + H2O = ADP + phosphate + H(+). Its function is as follows. Could be a global transcriptional regulator. Modifies gene expression by affecting chromatin. The sequence is that of Transcriptional regulator ATRY (ATRY) from Notamacropus eugenii (Tammar wallaby).